The following is a 241-amino-acid chain: Spiralin (241 aa).

An N-terminal signal peptide occupies residues 1 to 23 (MKKLLSILAVFGVSAVGTTSVVA). Residue Cys-24 is the site of N-palmitoyl cysteine attachment. A lipid anchor (S-diacylglycerol cysteine) is attached at Cys-24.

The protein belongs to the spiralin family. In terms of assembly, seems to occur as dimer, tetramers, and large oligomers of identical chains. Post-translationally, palmitate and stearate are the major lipid components.

It localises to the cell membrane. In terms of biological role, major membrane protein of spiroplasma. The sequence is that of Spiralin (spi) from Spiroplasma citri.